A 199-amino-acid polypeptide reads, in one-letter code: MRLFIILSVASFGAIGVLSQGGGGGGAAGGLLEGGGGFEEYGHRSRGSIIGLSRGIEIGRHYGGGGGGGGEGEEGREHELRGGGLELGGGGGGGGGGGGGGGEGRHYEIGFGGSHFNTPVDVHHEEAIHLKAHPEYHSDYHVADHKTKDFKSKHEVRDGYKVKGTYSLLEPDHKTVRVVDYVSDKKRGFIARVSYRKHH.

The first 19 residues, 1 to 19, serve as a signal peptide directing secretion; that stretch reads MRLFIILSVASFGAIGVLS. The segment at 63-103 is disordered; it reads GGGGGGGGEGEEGREHELRGGGLELGGGGGGGGGGGGGGGE. The span at 82–102 shows a compositional bias: gly residues; the sequence is GGGLELGGGGGGGGGGGGGGG. One can recognise a Chitin-binding type R&amp;R domain in the interval 133 to 199; it reads HPEYHSDYHV…IARVSYRKHH (67 aa).

In terms of tissue distribution, epidermal regions synthesizing hard cuticle.

Cuticular proteins play a significant role in determining the physical properties of cuticles. This Tenebrio molitor (Yellow mealworm beetle) protein is Adult-specific cuticular protein ACP-22 (ACP22).